We begin with the raw amino-acid sequence, 395 residues long: MIITSLLDTDLYKFTMMQVVLHQFPGAEVEYRFKCRNAGAPGIGKLAPYVNEIREEIRGLCNLRFQDAELAYLKAMRFIKSDFVDFLGIFKLNEKYVSVTALPSGEIEVSIKGPWLHTILFEIPVLAIINEVYFRNTQKQPDLTEGRKRLDTKILELQADGLRELKIADYGTRRRFGKVWHEEVLRTLVTRLGTGMSGQLAGTSNVLFAMKLGLTPLGTMAHEYLQACQALGPRLRDSQVFGFESWAREYRGDLGIALSDVYGMSAFLRDFDMYFCKLFDGARHDSGDPFEWGERMLAHYVKNRVDPRTKTLIFSDALTVPRTIELYQQFRGRCQLAFGIGTNLTNDLGYEPLQIVIKMIRCNGQPVAKLSDTPSKNMCEDEKYLAYLRQVFEIG.

Phosphohistidine; by autocatalysis is present on His-222.

This sequence belongs to the NAPRTase family. Post-translationally, transiently phosphorylated on a His residue during the reaction cycle. Phosphorylation strongly increases the affinity for substrates and increases the rate of nicotinate D-ribonucleotide production. Dephosphorylation regenerates the low-affinity form of the enzyme, leading to product release.

The catalysed reaction is nicotinate + 5-phospho-alpha-D-ribose 1-diphosphate + ATP + H2O = nicotinate beta-D-ribonucleotide + ADP + phosphate + diphosphate. It functions in the pathway cofactor biosynthesis; NAD(+) biosynthesis; nicotinate D-ribonucleotide from nicotinate: step 1/1. Catalyzes the synthesis of beta-nicotinate D-ribonucleotide from nicotinate and 5-phospho-D-ribose 1-phosphate at the expense of ATP. This Polaromonas sp. (strain JS666 / ATCC BAA-500) protein is Nicotinate phosphoribosyltransferase.